The following is a 249-amino-acid chain: 2,3-bisphosphoglycerate-dependent phosphoglycerate mutase (249 aa).

Residues 9–16, 22–23, Arg61, 88–91, Lys99, 115–116, and 184–185 each bind substrate; these read RHGQSQWN, TG, ERHY, RR, and GN. His10 serves as the catalytic Tele-phosphohistidine intermediate. The active-site Proton donor/acceptor is Glu88.

The protein belongs to the phosphoglycerate mutase family. BPG-dependent PGAM subfamily. As to quaternary structure, homodimer.

The enzyme catalyses (2R)-2-phosphoglycerate = (2R)-3-phosphoglycerate. It participates in carbohydrate degradation; glycolysis; pyruvate from D-glyceraldehyde 3-phosphate: step 3/5. In terms of biological role, catalyzes the interconversion of 2-phosphoglycerate and 3-phosphoglycerate. This chain is 2,3-bisphosphoglycerate-dependent phosphoglycerate mutase, found in Xanthomonas campestris pv. campestris (strain 8004).